The chain runs to 118 residues: Dihydroneopterin aldolase (118 aa).

Residues E21, Y53, and 72-73 (IE) each bind substrate. K98 (proton donor/acceptor) is an active-site residue.

The protein belongs to the DHNA family.

It catalyses the reaction 7,8-dihydroneopterin = 6-hydroxymethyl-7,8-dihydropterin + glycolaldehyde. The catalysed reaction is 7,8-dihydroneopterin = 7,8-dihydromonapterin. Its pathway is cofactor biosynthesis; tetrahydrofolate biosynthesis; 2-amino-4-hydroxy-6-hydroxymethyl-7,8-dihydropteridine diphosphate from 7,8-dihydroneopterin triphosphate: step 3/4. Functionally, catalyzes the conversion of 7,8-dihydroneopterin to 6-hydroxymethyl-7,8-dihydropterin. Can use L-threo-dihydroneopterin and D-erythro-dihydroneopterin as substrates for the formation of 6-hydroxymethyldihydropterin, but it can also catalyze the epimerization of carbon 2' of dihydroneopterin to dihydromonapterin. This Haemophilus influenzae (strain ATCC 51907 / DSM 11121 / KW20 / Rd) protein is Dihydroneopterin aldolase (folB).